The following is a 394-amino-acid chain: MVKLIKSIKAHNDKAWCAKSHPTLPLLATASTDRTSHIYNLSAKKNFPLLAKLEEAHKRSVRSVDFKPPLGGVESPVDDFLDLPALATGSFDSTISIWGIDEPEEQDSMDDGDDDDDDEKINDKHAQLLTSINNEWNLMAIIEGHENEVKSVAWNYQGNLLASCSRDKTIWIWETDPETLEEFECISVLSDHQHDVKHITWHPSQNLLASSSYDDTIKLYKQDEDDDDWSCVGILNGHGGTVWCSSFENPTSPTFDANKIRLVSASDDLSVRIWSSIVEQTEQIEDTTDRLPSSIKSTNNEMVWEEEAILPAIHKYAVYSVSWSAKTGKISSTGSDGKLVIYRETESKKWEIESVYESAHGVYEINSVSWCTLDDKTEVLVTAGDDGAINIWEP.

WD repeat units follow at residues 10–49 (AHND…NFPL), 56–108 (AHKR…EQDS), 144–184 (GHEN…EEFE), 191–230 (DHQH…DDWS), 237–284 (GHGG…TEQI), 313–352 (IHKY…KWEI), and 359–394 (AHGV…IWEP).

Belongs to the WD repeat CIA1 family. Interacts with NAR1.

The protein resides in the cytoplasm. It is found in the nucleus. In terms of biological role, essential component of the cytosolic iron-sulfur (Fe/S) protein assembly machinery. Required for the maturation of extramitochondrial Fe/S proteins. The protein is Probable cytosolic iron-sulfur protein assembly protein 1 of Debaryomyces hansenii (strain ATCC 36239 / CBS 767 / BCRC 21394 / JCM 1990 / NBRC 0083 / IGC 2968) (Yeast).